The sequence spans 105 residues: Thioredoxin (105 aa).

The Thioredoxin domain maps to 2–105; sequence VKSVGNLADF…KLEETIKSLV (104 aa). Active-site nucleophile residues include Cys32 and Cys35. An intrachain disulfide couples Cys32 to Cys35. Cys69 and Cys73 each carry S-nitrosocysteine.

It belongs to the thioredoxin family. Post-translationally, may be nitrosylated on several cysteine residues, depending on the oxidation state. Nitrosylated Cys-73 may serve as donor for nitrosylation of target proteins.

It localises to the nucleus. It is found in the cytoplasm. The protein localises to the secreted. In terms of biological role, participates in various redox reactions through the reversible oxidation of its active center dithiol to a disulfide and catalyzes dithiol-disulfide exchange reactions. Plays a role in the reversible S-nitrosylation of cysteine residues in target proteins, and thereby contributes to the response to intracellular nitric oxide. Nitrosylates the active site Cys of CASP3 in response to nitric oxide (NO), and thereby inhibits caspase-3 activity. Induces the FOS/JUN AP-1 DNA binding activity in ionizing radiation (IR) cells through its oxidation/reduction status and stimulates AP-1 transcriptional activity. The sequence is that of Thioredoxin (TXN) from Gallus gallus (Chicken).